The chain runs to 483 residues: Arginine/agmatine antiporter (483 aa).

12 consecutive transmembrane segments (helical) span residues 11 to 31 (ILGT…GGIF), 41 to 61 (ASAG…FFIA), 85 to 105 (GFGP…QIFG), 124 to 144 (YFAG…IWIF), 157 to 177 (FVNI…ILIT), 208 to 228 (STML…VISG), 239 to 259 (ATIL…LLPF), 289 to 309 (VLMN…WTIL), 336 to 356 (PSFS…LVYF), 364 to 384 (MLEI…LFLV), 415 to 435 (LWLI…LLAL), and 458 to 478 (EILK…LFSA).

It belongs to the amino acid-polyamine-organocation (APC) superfamily. Basic amino acid/polyamine antiporter (APA) (TC 2.A.3.2) family.

It localises to the cell inner membrane. Functionally, catalyzes the exchange of L-arginine for agmatine. The arginine uptake by the bacterium in the macrophage may be a virulence factor against the host innate immune response. The polypeptide is Arginine/agmatine antiporter (aaxC) (Chlamydia trachomatis serovar A (strain ATCC VR-571B / DSM 19440 / HAR-13)).